Reading from the N-terminus, the 944-residue chain is Isoleucine--tRNA ligase (944 aa).

The 'HIGH' region signature appears at 58–68; the sequence is PYANGSIHIGH. Glu563 is a binding site for L-isoleucyl-5'-AMP. The 'KMSKS' region signature appears at 604-608; that stretch reads KMSKS. Lys607 contacts ATP. Positions 907, 910, 927, and 930 each coordinate Zn(2+).

It belongs to the class-I aminoacyl-tRNA synthetase family. IleS type 1 subfamily. As to quaternary structure, monomer. Requires Zn(2+) as cofactor.

It localises to the cytoplasm. It catalyses the reaction tRNA(Ile) + L-isoleucine + ATP = L-isoleucyl-tRNA(Ile) + AMP + diphosphate. In terms of biological role, catalyzes the attachment of isoleucine to tRNA(Ile). As IleRS can inadvertently accommodate and process structurally similar amino acids such as valine, to avoid such errors it has two additional distinct tRNA(Ile)-dependent editing activities. One activity is designated as 'pretransfer' editing and involves the hydrolysis of activated Val-AMP. The other activity is designated 'posttransfer' editing and involves deacylation of mischarged Val-tRNA(Ile). The sequence is that of Isoleucine--tRNA ligase from Salmonella typhimurium (strain LT2 / SGSC1412 / ATCC 700720).